The primary structure comprises 521 residues: Adenosylhomocysteinase-like 1 (521 aa).

Positions 1-92 are disordered; sequence MNNLADTVVV…EKVQKNSKGS (92 aa). Low complexity predominate over residues 54-73; the sequence is RSLSASSTDSFSSASYTGSS. Positions 220 and 245 each coordinate substrate. Position 246-248 (246-248) interacts with NAD(+); it reads SVT. Positions 275 and 279 each coordinate substrate. Residues 311-316, Glu-332, 388-390, Asn-435, Lys-515, 515-519, and Tyr-519 each bind NAD(+); these read GDVGKG, MGH, and KPNYY.

This sequence belongs to the adenosylhomocysteinase family. As to quaternary structure, interacts with Ahcy; the interaction may negatively regulate Ahcy catalytic activity. NAD(+) serves as cofactor.

Its function is as follows. Might play a role in the regulation of methionine metabolism possibly by binding and inactivating Ahcy. The protein is Adenosylhomocysteinase-like 1 of Drosophila melanogaster (Fruit fly).